The chain runs to 341 residues: MSGISFKSFVQSQYTPIPLPNHDFTGQTILITGASRGLGLEAASHFYRLNASKIILAVRDARKGPECIAFVRQYNPSSNTTVECWELDLTNVETIRQFVAKAKNLARLDAVILNAGMATMSFQAIDGMEKTLATNVTGTFLLAIGLLPALRLSGLRNNIRPRMVLVSSQGHEAAAFAERDADDIFAALNDADKTDMTDRYDTSKLIQLLAFYALKDTVDKSWPDSITFTAVDPGLCDTDLTRDIPLLIRIIHRIMKMLLARTAEVGGRCLVLGAADDEHSHGAYFKDGVIGSPPVAVTDPEGVELKNRVFSQLKSLLYSVDPQIMDACPVMESDEEAIRLN.

Leu38, Lys63, Asp88, and Asn114 together coordinate NADP(+). Residues Ser167 and Tyr200 each act as proton donor in the active site. Residues Tyr200 and Lys204 each coordinate NADP(+). The Lowers pKa of active site Tyr role is filled by Lys204.

Belongs to the short-chain dehydrogenases/reductases (SDR) family.

It participates in secondary metabolite biosynthesis. Short chain dehydrogenase; part of the Fg3_54/C64 gene cluster that mediates the biosynthesis of the octapeptide fusaoctaxin A, a virulence factor that is required for cell-to-cell invasiveness of plant host. The 2 nonribosomal peptide synthetases NRPS9 and NRPS5 form an assembly line which likely utilizes GABA as a starter unit (loaded on the unique module M1 of NRPS9) and sequentially incorporates seven extender units composed of the residues L-Ala, L-allo-Ile, L-Ser, L-Val, L-Ser, L-Leu and L-Leu, respectively. During the process, each of the residues that are tethered on modules M3-M7 of NRPS5 containing an E domain can undergo an epimerization reaction to produce a D-configuration before the transpeptidation reaction occurs. The elongation of the peptidyl chain might be terminated by module M8-mediated L-Leu incorporation, followed by R domain-catalyzed 4 electron reduction to release the resulting octapeptide from the assembly line as an alcohol. Fusaoctaxin A is cleaved by the cluster specific ABC transporter FGM5 to the pentapeptide fusapentaxin A and the tripeptide fusatrixin A. The other enzymes from the cluster, FGM1, FGM2, FGM3 and FGM9 seem not to be involved in the biosynthesis of fusaoctaxin A and their functions have still to be determined. The chain is Short chain dehydrogenase FGM9 from Gibberella zeae (strain ATCC MYA-4620 / CBS 123657 / FGSC 9075 / NRRL 31084 / PH-1) (Wheat head blight fungus).